Reading from the N-terminus, the 73-residue chain is UPF0352 protein HSM_0097 (73 aa).

The protein belongs to the UPF0352 family.

The sequence is that of UPF0352 protein HSM_0097 from Histophilus somni (strain 2336) (Haemophilus somnus).